The following is a 3392-amino-acid chain: Genome polyprotein (3392 aa).

An interaction with host EXOC1 region spans residues 1-15 (MNNQRKKTGRPSFNM). Over 1–101 (MNNQRKKTGR…LNIMNRRKRS (101 aa)) the chain is Cytoplasmic. Residues 37-72 (LLSGQGPMKLVMAFIAFLRFLAIPPTAGILARWGSF) are hydrophobic; homodimerization of capsid protein C. The propeptide at 101–114 (SVTMLLMLLPTALA) is ER anchor for the capsid protein C, removed in mature form by serine protease NS3. A helical membrane pass occupies residues 102 to 119 (VTMLLMLLPTALAFHLTT). Over 120–242 (RGGEPHMIVS…QIQKVETWAL (123 aa)) the chain is Extracellular. A glycan (N-linked (GlcNAc...) asparagine; by host) is linked at Asn-183. A helical transmembrane segment spans residues 243–260 (RHPGFTVIALFLAHAIGT). Ser-261 is a topological domain (cytoplasmic). Residues 262–280 (ITQKGIIFILLMLVTPSMA) form a helical membrane-spanning segment. Over 281–725 (MRCVGIGNRD…IHQIFGTAYG (445 aa)) the chain is Extracellular. Disulfide bonds link Cys-283-Cys-310, Cys-340-Cys-401, Cys-354-Cys-385, and Cys-372-Cys-396. Asn-347 is a glycosylation site (N-linked (GlcNAc...) asparagine; by host). A fusion peptide region spans residues 378-391 (DRGWGNGCGLFGKG). Asn-433 carries an N-linked (GlcNAc...) asparagine; by host glycan. 2 disulfides stabilise this stretch: Cys-465–Cys-565 and Cys-582–Cys-613. Residues 726–746 (VLFSGVSWTMKIGIGILLTWL) form a helical membrane-spanning segment. The Cytoplasmic portion of the chain corresponds to 747–752 (GLNSRS). A helical membrane pass occupies residues 753–773 (TSLSMTCIAVGMVTLYLGVMV). Residues 774 to 1195 (QADSGCVINW…MVGANASDKM (422 aa)) are Extracellular-facing. Cystine bridges form between Cys-779–Cys-790, Cys-830–Cys-918, Cys-954–Cys-998, Cys-1055–Cys-1104, Cys-1066–Cys-1088, and Cys-1087–Cys-1091. Residues Asn-905 and Asn-982 are each glycosylated (N-linked (GlcNAc...) asparagine; by host). Asn-1190 carries N-linked (GlcNAc...) asparagine; by host glycosylation. Residues 1196-1220 (GMGTTYLALMATFRMRPMFAVGLLF) traverse the membrane as a helical segment. Residues 1221–1226 (RRLTSR) lie on the Cytoplasmic side of the membrane. The helical transmembrane segment at 1227 to 1245 (EVLLLTVGLSLVASVELPN) threads the bilayer. At 1246 to 1269 (SLEELGDGLAMGIMMLKLLTDFQS) the chain is on the lumenal side. A helical membrane pass occupies residues 1270–1290 (HQLWATLLSLTFVKTTFSLHY). Ala-1291 is a topological domain (cytoplasmic). A helical transmembrane segment spans residues 1292–1310 (WKTMAMILSIVSLFPLCLS). Over 1311 to 1315 (TTSQK) the chain is Lumenal. A helical transmembrane segment spans residues 1316–1336 (TTWLPVLLGSLGCKPLTMFLI). At 1337–1351 (TENKIWGRKSWPLNE) the chain is on the cytoplasmic side. A helical transmembrane segment spans residues 1352-1370 (GIMAVGIVSILLSSLLKND). Position 1371 (Val-1371) is a topological domain, lumenal. A helical membrane pass occupies residues 1372-1391 (PLAGPLIAGGMLIACYVISG). Over 1392 to 1447 (SSADLSLEKAAEVSWEEEAEHSGASHNILVEVQDDGTMKIKDEERDDTLTILLKAT) the chain is Cytoplasmic. The interval 1398-1437 (LEKAAEVSWEEEAEHSGASHNILVEVQDDGTMKIKDEERD) is interacts with and activates NS3 protease. The helical intramembrane region spans 1448–1468 (LLAISGVYPMSIPATLFVWYF). At 1469-2148 (WQKKKQRSGV…MEELPDTIET (680 aa)) the chain is on the cytoplasmic side. Residues 1476–1653 (SGVLWDTPSP…KASQEGPLPE (178 aa)) enclose the Peptidase S7 domain. Catalysis depends on charge relay system; for serine protease NS3 activity residues His-1526, Asp-1550, and Ser-1610. The region spanning 1656–1812 (DEVFRKRNLT…QSNAVIQDEE (157 aa)) is the Helicase ATP-binding domain. The segment at 1660–1663 (RKRN) is important for RNA-binding. 1669–1676 (LHPGSGKT) serves as a coordination point for ATP. The DEAH box motif lies at 1760–1763 (DEAH). The Helicase C-terminal domain occupies 1822-1988 (SGYDWITDFP…GIIPALFEPE (167 aa)). The residue at position 1864 (Lys-1864) is an N6-acetyllysine; by host. Residues 2149-2169 (LMLLALIAVLTGGVTLFFLSG) form a helical membrane-spanning segment. Residues 2170–2171 (RG) lie on the Lumenal side of the membrane. An intramembrane region (helical) is located at residues 2172–2192 (LGKTSIGLLCVIASSALLWMA). Position 2193 (Ser-2193) is a topological domain, lumenal. The helical transmembrane segment at 2194–2214 (VEPHWIAASIILEFFLMVLLI) threads the bilayer. The Cytoplasmic portion of the chain corresponds to 2215-2229 (PEPDRQRTPQDNQLA). A helical membrane pass occupies residues 2230 to 2244 (YVVIGLLFMILTAAA). The Lumenal portion of the chain corresponds to 2245–2276 (NEMGLLETTKKDLGIGHAAAENHHHAAMLDVD). An intramembrane region (helical) is located at residues 2277–2297 (LHPASAWTLYAVATTIITPMM). Residues 2298–2349 (RHTIENTTANISLTAIANQAAILMGLDKGWPISKMDIGVPLLALGCYSQVNP) are Lumenal-facing. 2 N-linked (GlcNAc...) asparagine; by host glycosylation sites follow: Asn-2303 and Asn-2307. Residues 2350-2370 (LTLTAAVFMLVAHYAIIGPGL) form a helical membrane-spanning segment. At 2371-2415 (QAKATREAQKRTAAGIMKNPTVDGIVAIDLDPVVYDAKFEKQLGQ) the chain is on the cytoplasmic side. A helical transmembrane segment spans residues 2416–2436 (IMLLILCTSQILLMRTTWALC). Over 2437–2461 (ESITLATGPLTTLWEGSPGKFWNTT) the chain is Lumenal. An N-linked (GlcNAc...) asparagine; by host glycan is attached at Asn-2459. A helical membrane pass occupies residues 2462-2482 (IAVSMANIFRGSYLAGAGLAF). Over 2483–3392 (SLMKSLGGGR…NESDPEGALW (910 aa)) the chain is Cytoplasmic. In terms of domain architecture, mRNA cap 0-1 NS5-type MT spans 2495–2756 (TGAQGETLGE…DVDLGAGTRH (262 aa)). Ser-2549 lines the S-adenosyl-L-methionine pocket. Ser-2549 bears the Phosphoserine mark. Residue Lys-2554 is the For 2'-O-MTase activity of the active site. Positions 2570-2573 (VIDL) match the SUMO-interacting motif motif. Gly-2579, Trp-2580, Thr-2597, Lys-2598, Asp-2624, and Val-2625 together coordinate S-adenosyl-L-methionine. Asp-2639 serves as the catalytic For 2'-O-MTase activity. Ile-2640 lines the S-adenosyl-L-methionine pocket. Catalysis depends on for 2'-O-MTase activity residues Lys-2673 and Glu-2709. An S-adenosyl-L-methionine-binding site is contributed by Tyr-2711. Zn(2+) is bound by residues Glu-2930, His-2934, Cys-2939, and Cys-2942. Residues 3020–3169 (GNMYADDTAG…KPIDDRFATA (150 aa)) enclose the RdRp catalytic domain. Positions 3204, 3220, and 3339 each coordinate Zn(2+).

This sequence in the N-terminal section; belongs to the class I-like SAM-binding methyltransferase superfamily. mRNA cap 0-1 NS5-type methyltransferase family. As to quaternary structure, homodimer. Interacts (via N-terminus) with host EXOC1 (via C-terminus); this interaction results in EXOC1 degradation through the proteasome degradation pathway. Forms heterodimers with envelope protein E in the endoplasmic reticulum and Golgi. In terms of assembly, homodimer; in the endoplasmic reticulum and Golgi. Interacts with protein prM. Interacts with non-structural protein 1. As to quaternary structure, homodimer; Homohexamer when secreted. Interacts with envelope protein E. Interacts (via N-terminus) with serine protease NS3. In terms of assembly, forms a heterodimer with serine protease NS3. May form homooligomers. As to quaternary structure, forms a heterodimer with NS2B. Interacts with NS4B. Interacts with unphosphorylated RNA-directed RNA polymerase NS5; this interaction stimulates RNA-directed RNA polymerase NS5 guanylyltransferase activity. Interacts with host SHFL. Interacts with host MAVS; this interaction inhibits the synthesis of IFN-beta. Interacts with host SHFL. Interacts with host AUP1; the interaction occurs in the presence of Dengue virus NS4B and induces lipophagy which facilitates production of virus progeny particles. In terms of assembly, interacts with serine protease NS3. As to quaternary structure, homodimer. Interacts with host STAT2; this interaction inhibits the phosphorylation of the latter, and, when all viral proteins are present (polyprotein), targets STAT2 for degradation. Interacts with serine protease NS3. Post-translationally, sumoylation of RNA-directed RNA polymerase NS5 increases NS5 protein stability allowing proper viral RNA replication. Specific enzymatic cleavages in vivo yield mature proteins. Cleavages in the lumen of endoplasmic reticulum are performed by host signal peptidase, whereas cleavages in the cytoplasmic side are performed by the Serine protease NS3. Signal cleavage at the 2K-4B site requires a prior NS3 protease-mediated cleavage at the 4A-2K site. In terms of processing, cleaved in post-Golgi vesicles by a host furin, releasing the mature small envelope protein M, and peptide pr. This cleavage is incomplete as up to 30% of viral particles still carry uncleaved prM. Post-translationally, N-glycosylated. The excreted form is glycosylated and this is required for efficient secretion of the protein from infected cells. Acetylated by host KAT5. Acetylation modulates NS3 RNA-binding and unwinding activities and plays an important positive role for viral replication. In terms of processing, phosphorylated on serines residues. This phosphorylation may trigger NS5 nuclear localization. Post-translationally, N-glycosylated.

The protein resides in the virion. The protein localises to the host nucleus. It localises to the host cytoplasm. Its subcellular location is the host perinuclear region. It is found in the secreted. The protein resides in the virion membrane. The protein localises to the host endoplasmic reticulum membrane. It localises to the host mitochondrion. It carries out the reaction Selective hydrolysis of -Xaa-Xaa-|-Yaa- bonds in which each of the Xaa can be either Arg or Lys and Yaa can be either Ser or Ala.. The catalysed reaction is RNA(n) + a ribonucleoside 5'-triphosphate = RNA(n+1) + diphosphate. It catalyses the reaction a ribonucleoside 5'-triphosphate + H2O = a ribonucleoside 5'-diphosphate + phosphate + H(+). The enzyme catalyses ATP + H2O = ADP + phosphate + H(+). It carries out the reaction a 5'-end (5'-triphosphoguanosine)-ribonucleoside in mRNA + S-adenosyl-L-methionine = a 5'-end (N(7)-methyl 5'-triphosphoguanosine)-ribonucleoside in mRNA + S-adenosyl-L-homocysteine. The catalysed reaction is a 5'-end (N(7)-methyl 5'-triphosphoguanosine)-ribonucleoside in mRNA + S-adenosyl-L-methionine = a 5'-end (N(7)-methyl 5'-triphosphoguanosine)-(2'-O-methyl-ribonucleoside) in mRNA + S-adenosyl-L-homocysteine + H(+). Its function is as follows. Plays a role in virus budding by binding to the cell membrane and gathering the viral RNA into a nucleocapsid that forms the core of a mature virus particle. During virus entry, may induce genome penetration into the host cytoplasm after hemifusion induced by the surface proteins. Can migrate to the cell nucleus where it modulates host functions. Overcomes the anti-viral effects of host EXOC1 by sequestering and degrading the latter through the proteasome degradation pathway. Inhibits RNA silencing by interfering with host Dicer. In terms of biological role, prevents premature fusion activity of envelope proteins in trans-Golgi by binding to envelope protein E at pH6.0. After virion release in extracellular space, gets dissociated from E dimers. Functionally, acts as a chaperone for envelope protein E during intracellular virion assembly by masking and inactivating envelope protein E fusion peptide. prM is the only viral peptide matured by host furin in the trans-Golgi network probably to avoid catastrophic activation of the viral fusion activity in acidic Golgi compartment prior to virion release. prM-E cleavage is inefficient, and many virions are only partially matured. These uncleaved prM would play a role in immune evasion. Its function is as follows. May play a role in virus budding. Exerts cytotoxic effects by activating a mitochondrial apoptotic pathway through M extodomain. May display a viroporin activity. Binds to host cell surface receptor and mediates fusion between viral and cellular membranes. Envelope protein is synthesized in the endoplasmic reticulum in the form of heterodimer with protein prM. They play a role in virion budding in the ER, and the newly formed immature particle is covered with 60 spikes composed of heterodimer between precursor prM and envelope protein E. The virion is transported to the Golgi apparatus where the low pH causes dissociation of PrM-E heterodimers and formation of E homodimers. prM-E cleavage is ineficient, and many virions are only partially matured. These uncleaved prM would play a role in immune evasion. In terms of biological role, involved in immune evasion, pathogenesis and viral replication. Once cleaved off the polyprotein, is targeted to three destinations: the viral replication cycle, the plasma membrane and the extracellular compartment. Essential for viral replication. Required for formation of the replication complex and recruitment of other non-structural proteins to the ER-derived membrane structures. Excreted as a hexameric lipoparticle that plays a role against host immune response. Antagonizing the complement function. Binds to the host macrophages and dendritic cells. Inhibits signal transduction originating from Toll-like receptor 3 (TLR3). Functionally, disrupts the host endothelial glycocalyx layer of host pulmonary microvascular endothelial cells, inducing degradation of sialic acid and shedding of heparan sulfate proteoglycans. NS1 induces expression of sialidases, heparanase, and activates cathepsin L, which activates heparanase via enzymatic cleavage. These effects are probably linked to the endothelial hyperpermeability observed in severe dengue disease. Its function is as follows. Component of the viral RNA replication complex that functions in virion assembly and antagonizes the host immune response. Required cofactor for the serine protease function of NS3. May have membrane-destabilizing activity and form viroporins. In terms of biological role, displays three enzymatic activities: serine protease, NTPase and RNA helicase. NS3 serine protease, in association with NS2B, performs its autocleavage and cleaves the polyprotein at dibasic sites in the cytoplasm: C-prM, NS2A-NS2B, NS2B-NS3, NS3-NS4A, NS4A-2K and NS4B-NS5. NS3 RNA helicase binds RNA and unwinds dsRNA in the 3' to 5' direction. Functionally, regulates the ATPase activity of the NS3 helicase activity. NS4A allows NS3 helicase to conserve energy during unwinding. Plays a role in the inhibition of the host innate immune response. Interacts with host MAVS and thereby prevents the interaction between RIGI and MAVS. In turn, IFN-beta production is impaired. Interacts with host AUP1 which mediates induction of lipophagy in host cells and facilitates production of virus progeny particles. Its function is as follows. Functions as a signal peptide for NS4B and is required for the interferon antagonism activity of the latter. Induces the formation of ER-derived membrane vesicles where the viral replication takes place. Inhibits interferon (IFN)-induced host STAT1 phosphorylation and nuclear translocation, thereby preventing the establishment of a cellular antiviral state by blocking the IFN-alpha/beta pathway. In terms of biological role, replicates the viral (+) and (-) RNA genome, and performs the capping of genomes in the cytoplasm. NS5 methylates viral RNA cap at guanine N-7 and ribose 2'-O positions. Besides its role in RNA genome replication, also prevents the establishment of cellular antiviral state by blocking the interferon-alpha/beta (IFN-alpha/beta) signaling pathway. Inhibits host TYK2 and STAT2 phosphorylation, thereby preventing activation of JAK-STAT signaling pathway. This is Genome polyprotein from Aedes aegypti (Yellowfever mosquito).